The primary structure comprises 96 residues: Small ribosomal subunit protein bS20 (96 aa).

This sequence belongs to the bacterial ribosomal protein bS20 family.

Binds directly to 16S ribosomal RNA. This Anaplasma marginale (strain St. Maries) protein is Small ribosomal subunit protein bS20.